A 103-amino-acid polypeptide reads, in one-letter code: ATP-dependent Clp protease adapter protein ClpS 1 (103 aa).

Belongs to the ClpS family. In terms of assembly, binds to the N-terminal domain of the chaperone ClpA.

Its function is as follows. Involved in the modulation of the specificity of the ClpAP-mediated ATP-dependent protein degradation. The chain is ATP-dependent Clp protease adapter protein ClpS 1 from Rhodopseudomonas palustris (strain ATCC BAA-98 / CGA009).